The chain runs to 310 residues: Acetylglutamate kinase (310 aa).

Substrate is bound by residues 83-84, arginine 105, and asparagine 207; that span reads GG.

It belongs to the acetylglutamate kinase family. ArgB subfamily.

The protein resides in the cytoplasm. It catalyses the reaction N-acetyl-L-glutamate + ATP = N-acetyl-L-glutamyl 5-phosphate + ADP. The protein operates within amino-acid biosynthesis; L-arginine biosynthesis; N(2)-acetyl-L-ornithine from L-glutamate: step 2/4. Functionally, catalyzes the ATP-dependent phosphorylation of N-acetyl-L-glutamate. The polypeptide is Acetylglutamate kinase (Ralstonia nicotianae (strain ATCC BAA-1114 / GMI1000) (Ralstonia solanacearum)).